Consider the following 816-residue polypeptide: Molybdenum cofactor sulfurase (816 aa).

Position 273 is an N6-(pyridoxal phosphate)lysine (Lys-273). Cys-427 is an active-site residue. An MOSC domain is found at 647–812 (NSDSQSHSCI…IRVGEEIIPN (166 aa)).

It belongs to the class-V pyridoxal-phosphate-dependent aminotransferase family. MOCOS subfamily. It depends on pyridoxal 5'-phosphate as a cofactor. In terms of tissue distribution, ubiquitously expressed.

It catalyses the reaction Mo-molybdopterin + L-cysteine + AH2 = thio-Mo-molybdopterin + L-alanine + A + H2O. The protein operates within cofactor biosynthesis; molybdopterin biosynthesis. Sulfurates the molybdenum cofactor. Sulfation of molybdenum is essential for xanthine dehydrogenase (XDH) and aldehyde oxidase (ADO) enzymes in which molybdenum cofactor is liganded by 1 oxygen and 1 sulfur atom in active form. The polypeptide is Molybdenum cofactor sulfurase (FLACCA) (Solanum lycopersicum (Tomato)).